The chain runs to 167 residues: 3-isopropylmalate dehydratase small subunit (167 aa).

It belongs to the LeuD family. LeuD type 2 subfamily. As to quaternary structure, heterodimer of LeuC and LeuD.

The enzyme catalyses (2R,3S)-3-isopropylmalate = (2S)-2-isopropylmalate. It participates in amino-acid biosynthesis; L-leucine biosynthesis; L-leucine from 3-methyl-2-oxobutanoate: step 2/4. In terms of biological role, catalyzes the isomerization between 2-isopropylmalate and 3-isopropylmalate, via the formation of 2-isopropylmaleate. In Nitratidesulfovibrio vulgaris (strain ATCC 29579 / DSM 644 / CCUG 34227 / NCIMB 8303 / VKM B-1760 / Hildenborough) (Desulfovibrio vulgaris), this protein is 3-isopropylmalate dehydratase small subunit.